We begin with the raw amino-acid sequence, 228 residues long: Cytochrome c oxidase subunit 2 (228 aa).

The Mitochondrial intermembrane portion of the chain corresponds to 1-26 (MTTWANMNLQDSASPIMEQLIYFHDH). The chain crosses the membrane as a helical span at residues 27–48 (ALMIIIMILMVVSYMMIAMVFN). At 49–62 (KYINRFLLEGQMIE) the chain is on the mitochondrial matrix side. The chain crosses the membrane as a helical span at residues 63 to 82 (LAWTIAPAVILIFIAVPSLR). The Mitochondrial intermembrane portion of the chain corresponds to 83 to 228 (LLYLMDEINT…FINWILKMNM (146 aa)). Residues His-161, Cys-196, Glu-198, Cys-200, His-204, and Met-207 each contribute to the Cu cation site. Residue Glu-198 coordinates Mg(2+).

Belongs to the cytochrome c oxidase subunit 2 family. In terms of assembly, component of the cytochrome c oxidase (complex IV, CIV), a multisubunit enzyme composed of a catalytic core of 3 subunits and several supernumerary subunits. The complex exists as a monomer or a dimer and forms supercomplexes (SCs) in the inner mitochondrial membrane with ubiquinol-cytochrome c oxidoreductase (cytochrome b-c1 complex, complex III, CIII). Cu cation serves as cofactor.

It is found in the mitochondrion inner membrane. It carries out the reaction 4 Fe(II)-[cytochrome c] + O2 + 8 H(+)(in) = 4 Fe(III)-[cytochrome c] + 2 H2O + 4 H(+)(out). Functionally, component of the cytochrome c oxidase, the last enzyme in the mitochondrial electron transport chain which drives oxidative phosphorylation. The respiratory chain contains 3 multisubunit complexes succinate dehydrogenase (complex II, CII), ubiquinol-cytochrome c oxidoreductase (cytochrome b-c1 complex, complex III, CIII) and cytochrome c oxidase (complex IV, CIV), that cooperate to transfer electrons derived from NADH and succinate to molecular oxygen, creating an electrochemical gradient over the inner membrane that drives transmembrane transport and the ATP synthase. Cytochrome c oxidase is the component of the respiratory chain that catalyzes the reduction of oxygen to water. Electrons originating from reduced cytochrome c in the intermembrane space (IMS) are transferred via the dinuclear copper A center (CU(A)) of subunit 2 and heme A of subunit 1 to the active site in subunit 1, a binuclear center (BNC) formed by heme A3 and copper B (CU(B)). The BNC reduces molecular oxygen to 2 water molecules using 4 electrons from cytochrome c in the IMS and 4 protons from the mitochondrial matrix. The sequence is that of Cytochrome c oxidase subunit 2 (COII) from Periplaneta americana (American cockroach).